Consider the following 133-residue polypeptide: MATNRRVSRVAELIKREVSQMLINGIKDDRVGTGMVSVTDVDVSGDLQHAKIYVSIYGTEEAKAETMAGLKSATGFVRSELGARVRLRRTPEVTFIEDRSIERGTKVLTLLNKLENARSPDDIPSADDSLDED.

The protein belongs to the RbfA family. As to quaternary structure, monomer. Binds 30S ribosomal subunits, but not 50S ribosomal subunits or 70S ribosomes.

Its subcellular location is the cytoplasm. One of several proteins that assist in the late maturation steps of the functional core of the 30S ribosomal subunit. Associates with free 30S ribosomal subunits (but not with 30S subunits that are part of 70S ribosomes or polysomes). Required for efficient processing of 16S rRNA. May interact with the 5'-terminal helix region of 16S rRNA. This Nostoc sp. (strain PCC 7120 / SAG 25.82 / UTEX 2576) protein is Ribosome-binding factor A.